A 469-amino-acid polypeptide reads, in one-letter code: MCVICFVKALVRVFKIYLTASYTYPFRGWPVAFRWDDVRAVGRSSSHRALTCAAAAAGVWLLRDETLGGDALGRPPRGARSQAQCLLQQLRELPGQLASYALAHSLGRWLVYPGSVSLMTRALLPLLQQGQERLVERYHGRRAKLVACDGNEIDTMFMDRRQHPGSHVHGPRLVICCEGNAGFYEMGCLSAPLEAGYSVLGWNHPGFGSSTGVPFPQHDANAMDVVVEYALHRLHFPPAHLVVYGWSVGGFTATWATMTYPELGALVLDATFDDLVPLALKVMPHSWKGLVVRTVREHFNLNVAEQLCCYPGPVLLLRRTQDDVVSTSGRLRPLSPGDVEGNRGNELLLRLLEHRYPVVMAREGRAVVTRWLRAGSLAQEAAFYARYRVDEDWCLALLRSYRARCEEELEGEEALGPHGPAFPWLVGQGLSSRRRRRLALFLARKHLKNVEATHFSPLEPEEFQLPWRL.

One can recognise an AB hydrolase-1 domain in the interval 174 to 298 (VICCEGNAGF…GLVVRTVREH (125 aa)). Catalysis depends on charge relay system residues S247, D322, and H418.

This sequence belongs to the AB hydrolase superfamily. ABHD16 family.

It catalyses the reaction a 1,2-diacyl-sn-glycero-3-phospho-L-serine + H2O = a 2-acyl-sn-glycero-3-phospho-L-serine + a fatty acid + H(+). The catalysed reaction is a 1-acylglycerol + H2O = glycerol + a fatty acid + H(+). It carries out the reaction 1-(9Z-octadecenoyl)-glycerol + H2O = glycerol + (9Z)-octadecenoate + H(+). Its function is as follows. Hydrolyzes the sn-1 position of glycerophospholipids with high specificity towards phosphatidylserine (PS), PS-PLA1 enzyme. Also hydrolyzes the acyl chain of glycerolipids with a preference for the monoacylglycerol (MAG) 1-acylglycerol, MAG lipase. Plays a regulatory role in cellular lipid homeostasis by modulating genes involved in neutral lipid degradation and in phospholipid synthesis and composition. The chain is ABHD16B from Homo sapiens (Human).